A 137-amino-acid polypeptide reads, in one-letter code: Large-conductance mechanosensitive channel (137 aa).

2 helical membrane-spanning segments follow: residues 14–34 and 81–101; these read VLDL…INSL and GSFL…FLIV.

This sequence belongs to the MscL family. Homopentamer.

It is found in the cell membrane. Functionally, channel that opens in response to stretch forces in the membrane lipid bilayer. May participate in the regulation of osmotic pressure changes within the cell. In Chloroflexus aggregans (strain MD-66 / DSM 9485), this protein is Large-conductance mechanosensitive channel.